The following is a 549-amino-acid chain: MEIFFTILIMTLVVSLSGVVTRVMPFQIPLPLMQIAIGALLAWPTFGLHVEFDPELFLVLFIPPLLFADGWKTPTREFLEHGREIFGLALALVVVTVVGIGFLIYWVVPGIPLIPAFALAAVLSPTDAVALSGIVGEGRIPKKIMGILQGEALMNDASGLVSLKFAVAVAMGTMIFTVGGATVEFMKVAIGGILAGFVVSWLYGRSLRFLSRWGGDEPATQIVLLFLLPFASYLIAEHIGVSGILAAVAAGMTITRSGVMRRAPLAMRLRANSTWAMLEFVFNGMVFLLLGLQLPGILETSLMAAEIDPNVEIWMLFTNIILIYAALMLVRFGWLWTMKKFSNRFLKKKPMEFGSWTTREILIASFAGVRGAITLAGVLSIPLLLPDGNVFPARYELVFLAAGVILFSLFVGVVMLPILLQHIEVADHSQQLKEERIARAATAEVAIVAIQKMEERLAADTEENIDNQLLTEVSSRVIGNLRRRADGRNDVESSVQEENLERRFRLAALRSERAELYHLRATREISNETLQKLLHDLDLLEALLIEENQ.

The next 12 membrane-spanning stretches (helical) occupy residues 1–21 (MEIF…GVVT), 28–48 (IPLP…TFGL), 50–70 (VEFD…FADG), 85–105 (IFGL…FLIY), 106–126 (WVVP…LSPT), 165–185 (FAVA…TVEF), 187–207 (KVAI…GRSL), 222–242 (IVLL…IGVS), 278–298 (LEFV…PGIL), 310–330 (NVEI…LMLV), 361–381 (ILIA…VLSI), and 398–418 (VFLA…MLPI).

Belongs to the monovalent cation:proton antiporter 1 (CPA1) transporter (TC 2.A.36) family.

Its subcellular location is the cell inner membrane. This is an uncharacterized protein from Escherichia coli (strain K12).